We begin with the raw amino-acid sequence, 322 residues long: uncharacterized protein (322 aa).

Residues 1–63 are disordered; sequence MFKIRKRSVP…DEASSSDSHY (63 aa). Over residues 34–49 the composition is skewed to basic and acidic residues; the sequence is FVDDHGKPIAEYRDFP. Residues 245–274 form a C3H1-type zinc finger; that stretch reads WKVDRICTYYINRPDKCTRGDNCRFKHDDV. Residues 278-322 are disordered; it reads HRQKEIQSSRNQSWHHRTSSHKYSSENSDHRGYRRHRSRSPHARQ. Residues 309–322 show a composition bias toward basic residues; that stretch reads GYRRHRSRSPHARQ.

This is an uncharacterized protein from Caenorhabditis elegans.